A 312-amino-acid chain; its full sequence is Ribosomal protein L11 methyltransferase (312 aa).

S-adenosyl-L-methionine-binding residues include T160, G181, D203, and N246.

Belongs to the methyltransferase superfamily. PrmA family.

It is found in the cytoplasm. The catalysed reaction is L-lysyl-[protein] + 3 S-adenosyl-L-methionine = N(6),N(6),N(6)-trimethyl-L-lysyl-[protein] + 3 S-adenosyl-L-homocysteine + 3 H(+). Its function is as follows. Methylates ribosomal protein L11. This is Ribosomal protein L11 methyltransferase from Staphylococcus aureus (strain USA300).